A 255-amino-acid polypeptide reads, in one-letter code: 14-3-3-like protein GF14 psi (255 aa).

Phosphoserine is present on Ser66. At Thr162 the chain carries Phosphothreonine. Position 189 is a phosphoserine (Ser189). Thr210 and Thr238 each carry phosphothreonine.

This sequence belongs to the 14-3-3 family. As to quaternary structure, component of a DNA binding complex that binds to the G box. Interacts with IDH3, AGT3, GLN1-1, GLN1-2, GLN1-4, SAM1, SAM2, MDH1, METK3 and MDH2. Binds to 1-aminocyclopropane-1-carboxylate synthases (ACS) such as ACS2, ACS5, ACS6, ACS8, and ACS11. Interacts with FD. Interacts with DREB1A and DREB1B in the nucleus. Interacts with CINV1.

The protein resides in the cytoplasm. It localises to the nucleus. Its function is as follows. Is associated with a DNA binding complex that binds to the G box, a well-characterized cis-acting DNA regulatory element found in plant genes. Involved in the regulation of nutrient metabolism. Reciprocal negative transcription regulation of miR396. Negative regulator of constitutive freezing tolerance and cold acclimation by controlling cold-induced gene expression partially through an ethylene (ET)-dependent pathway; prevents ethylene (ET) biosynthesis, probably by binding 1-aminocyclopropane-1-carboxylate synthases (ACS) to reduce their stability, thus contributing to establish adequate ET levels under both standard and low-temperature conditions. This is 14-3-3-like protein GF14 psi from Arabidopsis thaliana (Mouse-ear cress).